A 327-amino-acid chain; its full sequence is tRNA uridine(34) hydroxylase (327 aa).

Residues Leu130 to Glu224 form the Rhodanese domain. Residue Cys184 is the Cysteine persulfide intermediate of the active site.

The protein belongs to the TrhO family.

The enzyme catalyses uridine(34) in tRNA + AH2 + O2 = 5-hydroxyuridine(34) in tRNA + A + H2O. In terms of biological role, catalyzes oxygen-dependent 5-hydroxyuridine (ho5U) modification at position 34 in tRNAs. The sequence is that of tRNA uridine(34) hydroxylase from Streptococcus thermophilus (strain ATCC BAA-250 / LMG 18311).